Consider the following 686-residue polypeptide: DNA ligase 1 (686 aa).

Residues 35–39 (DFEYD), 84–85 (SL), and Glu-119 each bind NAD(+). Residue Lys-121 is the N6-AMP-lysine intermediate of the active site. Positions 142, 177, 293, and 317 each coordinate NAD(+). The Zn(2+) site is built by Cys-411, Cys-414, Cys-429, and Cys-434. In terms of domain architecture, BRCT spans 602-686 (RVGEQLAGLT…LAEKGAPPLP (85 aa)).

This sequence belongs to the NAD-dependent DNA ligase family. LigA subfamily. The cofactor is Mg(2+). Mn(2+) is required as a cofactor.

It carries out the reaction NAD(+) + (deoxyribonucleotide)n-3'-hydroxyl + 5'-phospho-(deoxyribonucleotide)m = (deoxyribonucleotide)n+m + AMP + beta-nicotinamide D-nucleotide.. In terms of biological role, DNA ligase that catalyzes the formation of phosphodiester linkages between 5'-phosphoryl and 3'-hydroxyl groups in double-stranded DNA using NAD as a coenzyme and as the energy source for the reaction. It is essential for DNA replication and repair of damaged DNA. The polypeptide is DNA ligase 1 (Deinococcus deserti (strain DSM 17065 / CIP 109153 / LMG 22923 / VCD115)).